The chain runs to 268 residues: MNTKEISKVVDLVRESNPLVHNITNVVVTNFTANGLLALGASPVMAYAKEEVAEMASIAGALVLNMGTLRPDEVEAMLLAGKSANTNDVPVLFDPVGAGATSYRTEVARHIPAEIELAIIRGNAAEIANVINEKWEIKGVDAGVGNGNVVSIAKQAADELNTVAVITGKEDVVTDGERTIVIRNGHSILTKVTGTGCLLTSVIGAFVAVEKDYVKAAVAALTFYGVAAELAAAKTVEKGPGSFQIEFLNQLANTTSGDIEKYGKIEVI.

M45 contacts substrate. R121 and T167 together coordinate ATP. Residue G194 coordinates substrate.

Belongs to the Thz kinase family. The cofactor is Mg(2+).

It catalyses the reaction 5-(2-hydroxyethyl)-4-methylthiazole + ATP = 4-methyl-5-(2-phosphooxyethyl)-thiazole + ADP + H(+). The protein operates within cofactor biosynthesis; thiamine diphosphate biosynthesis; 4-methyl-5-(2-phosphoethyl)-thiazole from 5-(2-hydroxyethyl)-4-methylthiazole: step 1/1. Its function is as follows. Catalyzes the phosphorylation of the hydroxyl group of 4-methyl-5-beta-hydroxyethylthiazole (THZ). This chain is Hydroxyethylthiazole kinase, found in Bacillus thuringiensis subsp. konkukian (strain 97-27).